We begin with the raw amino-acid sequence, 301 residues long: Heme A synthase (301 aa).

At 1 to 7 (MHKGLKR) the chain is on the cytoplasmic side. Residues 8–28 (LGVITSLGVLLVLIQGALVTN) traverse the membrane as a helical segment. Residues 29–56 (TGSGEGCGQTWPLCFGQVIPLDPPPETV) are Extracellular-facing. C35 and C42 are joined by a disulfide. The helical transmembrane segment at 57-77 (IEFSHRLVAGIVGMLVILMAI) threads the bilayer. The active site involves E58. H61 contacts heme o. At 78–92 (WSWRRLKHMPETRFL) the chain is on the cytoplasmic side. Residues 93-113 (AVISVFMIIFQGLLGAGAVVF) form a helical membrane-spanning segment. At 114–117 (GQSD) the chain is on the extracellular side. Residues 118–138 (LIMALHFGFSALSFASVVLLT) form a helical membrane-spanning segment. Residue H123 participates in heme o binding. Topologically, residues 139–159 (RLAFEDSNPQKQYAPIVSKAY) are cytoplasmic. A helical membrane pass occupies residues 160–180 (KGYVIFVAIYSYVAIYTGAYV). The Extracellular portion of the chain corresponds to 181-215 (KHTNATLACSGFPLCNGQWVPDVFTEAIGVQLLHR). C189 and C195 are disulfide-bonded. Residue H214 participates in heme b binding. A helical membrane pass occupies residues 216–236 (SAAILLSLLLLVLFIWTVKTF). Topologically, residues 237 to 240 (RASR) are cytoplasmic. The chain crosses the membrane as a helical span at residues 241–261 (VLVVCASLAMLLVIGQAASGV). Residues 262-274 (AVVLTYNATLTLG) lie on the Extracellular side of the membrane. A helical transmembrane segment spans residues 275–295 (IFHALLISLLFTLLCYMVMLV). Position 277 (H277) interacts with heme b. Residues 296 to 301 (TRHKAK) are Cytoplasmic-facing.

This sequence belongs to the COX15/CtaA family. Type 1 subfamily. In terms of assembly, interacts with CtaB. It depends on heme b as a cofactor.

The protein localises to the cell membrane. The catalysed reaction is Fe(II)-heme o + 2 A + H2O = Fe(II)-heme a + 2 AH2. Its pathway is porphyrin-containing compound metabolism; heme A biosynthesis; heme A from heme O: step 1/1. Functionally, catalyzes the conversion of heme O to heme A by two successive hydroxylations of the methyl group at C8. The first hydroxylation forms heme I, the second hydroxylation results in an unstable dihydroxymethyl group, which spontaneously dehydrates, resulting in the formyl group of heme A. This Shouchella clausii (strain KSM-K16) (Alkalihalobacillus clausii) protein is Heme A synthase.